We begin with the raw amino-acid sequence, 242 residues long: ATP synthase subunit a (242 aa).

The next 5 helical transmembrane spans lie at 21 to 41 (LSSI…AIIC), 83 to 103 (AVTL…FSIV), 117 to 137 (DATV…FYGI), 175 to 195 (LYGN…LFFN), and 198 to 218 (AWGW…SIFV).

It belongs to the ATPase A chain family. F-type ATPases have 2 components, CF(1) - the catalytic core - and CF(0) - the membrane proton channel. CF(1) has five subunits: alpha(3), beta(3), gamma(1), delta(1), epsilon(1). CF(0) has three main subunits: a(1), b(2) and c(9-12). The alpha and beta chains form an alternating ring which encloses part of the gamma chain. CF(1) is attached to CF(0) by a central stalk formed by the gamma and epsilon chains, while a peripheral stalk is formed by the delta and b chains.

It is found in the cell membrane. In terms of biological role, key component of the proton channel; it plays a direct role in the translocation of protons across the membrane. The protein is ATP synthase subunit a of Staphylococcus aureus (strain Newman).